A 416-amino-acid polypeptide reads, in one-letter code: Exodeoxyribonuclease 7 large subunit (416 aa).

The protein belongs to the XseA family. Heterooligomer composed of large and small subunits.

Its subcellular location is the cytoplasm. The catalysed reaction is Exonucleolytic cleavage in either 5'- to 3'- or 3'- to 5'-direction to yield nucleoside 5'-phosphates.. Functionally, bidirectionally degrades single-stranded DNA into large acid-insoluble oligonucleotides, which are then degraded further into small acid-soluble oligonucleotides. The chain is Exodeoxyribonuclease 7 large subunit from Sulfurimonas denitrificans (strain ATCC 33889 / DSM 1251) (Thiomicrospira denitrificans (strain ATCC 33889 / DSM 1251)).